The primary structure comprises 214 residues: Probable transaldolase (214 aa).

The active-site Schiff-base intermediate with substrate is Lys83.

This sequence belongs to the transaldolase family. Type 3B subfamily.

It localises to the cytoplasm. The catalysed reaction is D-sedoheptulose 7-phosphate + D-glyceraldehyde 3-phosphate = D-erythrose 4-phosphate + beta-D-fructose 6-phosphate. It participates in carbohydrate degradation; pentose phosphate pathway; D-glyceraldehyde 3-phosphate and beta-D-fructose 6-phosphate from D-ribose 5-phosphate and D-xylulose 5-phosphate (non-oxidative stage): step 2/3. Functionally, transaldolase is important for the balance of metabolites in the pentose-phosphate pathway. This chain is Probable transaldolase, found in Geobacter sp. (strain M21).